The primary structure comprises 176 residues: ATP synthase subunit b (176 aa).

The helical transmembrane segment at 14 to 34 threads the bilayer; that stretch reads STTLGTMIVVSGAFLILMLLL.

This sequence belongs to the ATPase B chain family. In terms of assembly, F-type ATPases have 2 components, F(1) - the catalytic core - and F(0) - the membrane proton channel. F(1) has five subunits: alpha(3), beta(3), gamma(1), delta(1), epsilon(1). F(0) has three main subunits: a(1), b(2) and c(10-14). The alpha and beta chains form an alternating ring which encloses part of the gamma chain. F(1) is attached to F(0) by a central stalk formed by the gamma and epsilon chains, while a peripheral stalk is formed by the delta and b chains.

It localises to the cell membrane. Its function is as follows. F(1)F(0) ATP synthase produces ATP from ADP in the presence of a proton or sodium gradient. F-type ATPases consist of two structural domains, F(1) containing the extramembraneous catalytic core and F(0) containing the membrane proton channel, linked together by a central stalk and a peripheral stalk. During catalysis, ATP synthesis in the catalytic domain of F(1) is coupled via a rotary mechanism of the central stalk subunits to proton translocation. Component of the F(0) channel, it forms part of the peripheral stalk, linking F(1) to F(0). This is ATP synthase subunit b from Enterococcus faecalis (strain ATCC 700802 / V583).